Here is a 179-residue protein sequence, read N- to C-terminus: Large ribosomal subunit protein uL6 (179 aa).

It belongs to the universal ribosomal protein uL6 family. As to quaternary structure, part of the 50S ribosomal subunit.

This protein binds to the 23S rRNA, and is important in its secondary structure. It is located near the subunit interface in the base of the L7/L12 stalk, and near the tRNA binding site of the peptidyltransferase center. The polypeptide is Large ribosomal subunit protein uL6 (Desulfovibrio desulfuricans (strain ATCC 27774 / DSM 6949 / MB)).